We begin with the raw amino-acid sequence, 122 residues long: Large ribosomal subunit protein uL14 (122 aa).

The protein belongs to the universal ribosomal protein uL14 family. In terms of assembly, part of the 50S ribosomal subunit. Forms a cluster with proteins L3 and L19. In the 70S ribosome, L14 and L19 interact and together make contacts with the 16S rRNA in bridges B5 and B8.

Binds to 23S rRNA. Forms part of two intersubunit bridges in the 70S ribosome. This is Large ribosomal subunit protein uL14 from Bifidobacterium adolescentis (strain ATCC 15703 / DSM 20083 / NCTC 11814 / E194a).